A 306-amino-acid chain; its full sequence is Aspartate carbamoyltransferase catalytic subunit (306 aa).

Positions 55 and 56 each coordinate carbamoyl phosphate. Lys-84 serves as a coordination point for L-aspartate. Carbamoyl phosphate is bound by residues Arg-105, His-133, and Gln-136. L-aspartate-binding residues include Arg-166 and Arg-227. Leu-265 and Pro-266 together coordinate carbamoyl phosphate.

The protein belongs to the aspartate/ornithine carbamoyltransferase superfamily. ATCase family. In terms of assembly, heterododecamer (2C3:3R2) of six catalytic PyrB chains organized as two trimers (C3), and six regulatory PyrI chains organized as three dimers (R2).

It catalyses the reaction carbamoyl phosphate + L-aspartate = N-carbamoyl-L-aspartate + phosphate + H(+). It functions in the pathway pyrimidine metabolism; UMP biosynthesis via de novo pathway; (S)-dihydroorotate from bicarbonate: step 2/3. In terms of biological role, catalyzes the condensation of carbamoyl phosphate and aspartate to form carbamoyl aspartate and inorganic phosphate, the committed step in the de novo pyrimidine nucleotide biosynthesis pathway. This Neisseria meningitidis serogroup C (strain 053442) protein is Aspartate carbamoyltransferase catalytic subunit.